The chain runs to 64 residues: MPKMKTDRGVAKRFKKTANGFKRKQAHLRHILTKKSTKRKRHLRAKCLVSKADVPAIARQLPYA.

This sequence belongs to the bacterial ribosomal protein bL35 family.

The sequence is that of Large ribosomal subunit protein bL35 from Shewanella putrefaciens (strain CN-32 / ATCC BAA-453).